A 111-amino-acid chain; its full sequence is uncharacterized protein (111 aa).

Residues 8–111 (LFLKIIKREE…HVHIIPYYKK (104 aa)) form the HIT domain. Residues 100-104 (HTHVH) carry the Histidine triad motif motif.

This is an uncharacterized protein from Mesomycoplasma hyorhinis (Mycoplasma hyorhinis).